The following is a 493-amino-acid chain: Beta-hexosaminidase Amuc_2018 (493 aa).

Positions 1-21 (MARPLPILGGILLSFSPPAEA) are cleaved as a signal peptide. Arginine 122 provides a ligand contact to substrate. Active-site charge relay system residues include aspartate 151 and histidine 214. The Zn(2+) site is built by cysteine 227 and cysteine 247. Aspartate 278 lines the substrate pocket. Glutamate 279 functions as the Charge relay system in the catalytic mechanism. Zn(2+) contacts are provided by cysteine 288 and cysteine 291. Substrate is bound by residues tryptophan 345, 373–375 (YLD), and 421–423 (WAE).

The protein belongs to the glycosyl hydrolase 20 family.

The enzyme catalyses Hydrolysis of terminal non-reducing N-acetyl-D-hexosamine residues in N-acetyl-beta-D-hexosaminides.. With respect to regulation, significantly inhibited by the addition of sodium dodecyl sulfate (SDS), but not by EDTA, urea, 2-mercaptoethanol or Triton X-100. Strongly inhibited by Cu2(+) ions, in case of which the activity is decreased by 70%. No significant inhibition with Al(3+), Fe(3+), Ca(2+), Cd(2+), Mg(2+), Mn(2+), Ni(2+) and Zn(2+) ions. Strongly inhibited by PugNAc (O-(2-acetamido-2-deoxy-D-glucopyranosylideneamino) N-phenylcarbamate) in the sub-micromolar concentration range. PugNAc at a concentration of 0.5 mM decreases the activity by 50% and the addition of 1 mM PugNAc fully inhibits the enzyme. No significant reduction in the activity by alkylation using N-ethylmaleimide or 2-iodoacetamide. Its function is as follows. Hydrolyzes terminal GlcNAc residues from terminally unbranched N-glycans and from chitobiose. Hydrolyzes beta-1,6-linked N-acetylglucosamine and beta-1,4-linked N-acetylgalactosamine from pNP-alpha-GalNAc[beta1,3Gal]beta1,6GlcNAc and pNP-beta-GlcNAc-beta1,4-GalNAc substrates, respectively, as well as beta-1,2-linked N-acetylglucosamine units from the non-reducing end of N-glycans. Hydrolyzes GlcNAc residues linked to alpha1,3- or alpha1,6-mannose branch, but has low activity on substrates with more than one GlcNAc residue on one of the mannose branches. Releases terminal GlcNAc moieties from the N-glycopeptide Gly-Glu-Asn-(GlcNAc2Man3GlcNAc2)-Arg with high efficiency. Has moderate hydrolytic activity on the chitobiose moiety of N-glycopeptide substrate Gly-Glu-Asn-(GlcNAc2)-Arg. Does not hydrolyze GlcNAc residues from N-glycan structures bearing a bisecting GlcNAc moiety (beta1,4-linked GlcNAc to the beta1,4-linked core mannose). Potentially capable of cleaving the specific glycoside linkages in the process of mucin degradation in human intestinal tract. Hydrolyzes synthetic substrate pNP-beta-GlcNAc with high activity and pNP-beta-GalNAc to a lesser extent. Does not hydrolyze pNP-beta-glucose, pNP-beta-galactose, pNP-alpha-glucose, pNP-alpha-galactose, pNP-alpha-GlcNAc or pNP-alpha-fucose. The polypeptide is Beta-hexosaminidase Amuc_2018 (Akkermansia muciniphila (strain ATCC BAA-835 / DSM 22959 / JCM 33894 / BCRC 81048 / CCUG 64013 / CIP 107961 / Muc)).